Consider the following 423-residue polypeptide: Tyrosine--tRNA ligase (423 aa).

L-tyrosine is bound at residue Y35. A 'HIGH' region motif is present at residues P40–H49. Residues Y170 and Q174 each contribute to the L-tyrosine site. Residues K230–S234 carry the 'KMSKS' region motif. K233 contacts ATP. The 58-residue stretch at D355–G412 folds into the S4 RNA-binding domain.

This sequence belongs to the class-I aminoacyl-tRNA synthetase family. TyrS type 1 subfamily. As to quaternary structure, homodimer.

Its subcellular location is the cytoplasm. It carries out the reaction tRNA(Tyr) + L-tyrosine + ATP = L-tyrosyl-tRNA(Tyr) + AMP + diphosphate + H(+). Functionally, catalyzes the attachment of tyrosine to tRNA(Tyr) in a two-step reaction: tyrosine is first activated by ATP to form Tyr-AMP and then transferred to the acceptor end of tRNA(Tyr). The protein is Tyrosine--tRNA ligase of Mycobacterium sp. (strain JLS).